Reading from the N-terminus, the 238-residue chain is 15,16-dihydrobiliverdin:ferredoxin oxidoreductase (238 aa).

It belongs to the HY2 family.

It carries out the reaction 15,16-dihydrobiliverdin + oxidized 2[4Fe-4S]-[ferredoxin] = biliverdin IXalpha + reduced 2[4Fe-4S]-[ferredoxin] + 2 H(+). Its function is as follows. Catalyzes the two-electron reduction of biliverdin IX-alpha at the C15 methine bridge. This Prochlorococcus marinus (strain NATL1A) protein is 15,16-dihydrobiliverdin:ferredoxin oxidoreductase.